The sequence spans 107 residues: Wound-induced proteinase inhibitor 1 (107 aa).

An N-terminal signal peptide occupies residues 1 to 23 (MESKFAHIIVFFLLATSFETLLA). Positions 24–36 (RKESDGPEVIELQ) are excised as a propeptide.

This sequence belongs to the protease inhibitor I13 (potato type I serine protease inhibitor) family. Heterogeneous tetramers of similar chains.

Its function is as follows. Inhibits both chymotrypsin and trypsin. This Solanum tuberosum (Potato) protein is Wound-induced proteinase inhibitor 1.